Consider the following 130-residue polypeptide: Small ribosomal subunit protein uS9 (130 aa).

The protein belongs to the universal ribosomal protein uS9 family.

This chain is Small ribosomal subunit protein uS9, found in Carboxydothermus hydrogenoformans (strain ATCC BAA-161 / DSM 6008 / Z-2901).